The following is a 316-amino-acid chain: MTNEFHHVTVLLHETVDMLDIKPDGIYVDATLGGAGHSSYLLSQLSEKGHLYCFDQDQKAIDNAQVRLKDYIDKGMVTFIKDNFRNLKSNLEALGVSEIDGILYDLGVSSPQLDERERGFSYKQDAKLDMRMNEEASLTAYDVVNTYPYNDLVRIFFKYGEDKFSKQIARKIEQARQVKPIETTTELAEIIKSAKPAKELKKKGHPAKQIFQAIRIEVNDELGAADESIQEALDLLAVDGRISVITFHSLEDRLTKQLFKEASTVDVPKGLPFIPEDLQPKVALVNRKPILPSQEELEANNRSHSAKLRVAKKIRK.

Residues 35–37 (AGH), D55, F84, D105, and Q112 contribute to the S-adenosyl-L-methionine site.

It belongs to the methyltransferase superfamily. RsmH family.

It is found in the cytoplasm. It catalyses the reaction cytidine(1402) in 16S rRNA + S-adenosyl-L-methionine = N(4)-methylcytidine(1402) in 16S rRNA + S-adenosyl-L-homocysteine + H(+). Specifically methylates the N4 position of cytidine in position 1402 (C1402) of 16S rRNA. The chain is Ribosomal RNA small subunit methyltransferase H from Streptococcus thermophilus (strain CNRZ 1066).